The primary structure comprises 631 residues: MPKIHELSETLTNQIAAGEVIERPASVVKELVENSLDAGATRIRVDFVDAGLKQIVVQDNGTGIARDQVDLAFTRHATSKISNEHDLFKVATLGFRGEALASISAVSHVEILTATKGAIGVKATFSGGNKKGQEDAAAREGTQITVRDLFFNTPARLKYLRSPRTEIMKIVDIINRLALGYPSVSFTLSNTGKVLLRTPGNGNLKQTVANVYGRHIAEKMEEFEAKDNDFKISGLMSKPELTRSTRNFVSILLNGRYIRNFQLNTAIMDGYGAKLAARHYPIIVLAIQVDPLLVDVNVHPTKQEVRLSKEKELSRLITSTISNVFIKKTEQTSAFANLENKRETLVDQLQFNLNQNVVNTARKKTPEIHENNEKPEFLAKPKKPEEEKTDYVDLNIPREDDKYIITKTWDKNVLLQQDLRPFSNTLCDSEVISSGDETLANNLPQLSYIGQIDTYIIAENNSDLFLIDQVAARRRLQFEKIYEMLLSKKIVQQGLLTPIVLEFGNLDFIQIKDKIDQIKQIGIYLEDFGQNSFIVRSYPTWIHNDVEETIRQILDGYLNLDKGKSENLFKRVAAMQAKRDISGKINLAAAEASQILIDLRKTEDPYHDADGRLVLVRMSENELKKMFKRDK.

Belongs to the DNA mismatch repair MutL/HexB family.

Its function is as follows. This protein is involved in the repair of mismatches in DNA. It is required for dam-dependent methyl-directed DNA mismatch repair. May act as a 'molecular matchmaker', a protein that promotes the formation of a stable complex between two or more DNA-binding proteins in an ATP-dependent manner without itself being part of a final effector complex. The protein is DNA mismatch repair protein MutL of Lactobacillus acidophilus (strain ATCC 700396 / NCK56 / N2 / NCFM).